Consider the following 392-residue polypeptide: Formate-dependent phosphoribosylglycinamide formyltransferase (392 aa).

N(1)-(5-phospho-beta-D-ribosyl)glycinamide-binding positions include 22–23 and E82; that span reads EL. Residues R114, K155, 160–165, 195–198, and E203 contribute to the ATP site; these read SSGKGQ and EGVV. The ATP-grasp domain maps to 119-308; sequence RLAAEELQLP…EFALHVRAFL (190 aa). Residues E267 and E279 each coordinate Mg(2+). N(1)-(5-phospho-beta-D-ribosyl)glycinamide-binding positions include D286, K355, and 362-363; that span reads RR.

The protein belongs to the PurK/PurT family. In terms of assembly, homodimer.

The catalysed reaction is N(1)-(5-phospho-beta-D-ribosyl)glycinamide + formate + ATP = N(2)-formyl-N(1)-(5-phospho-beta-D-ribosyl)glycinamide + ADP + phosphate + H(+). It functions in the pathway purine metabolism; IMP biosynthesis via de novo pathway; N(2)-formyl-N(1)-(5-phospho-D-ribosyl)glycinamide from N(1)-(5-phospho-D-ribosyl)glycinamide (formate route): step 1/1. Involved in the de novo purine biosynthesis. Catalyzes the transfer of formate to 5-phospho-ribosyl-glycinamide (GAR), producing 5-phospho-ribosyl-N-formylglycinamide (FGAR). Formate is provided by PurU via hydrolysis of 10-formyl-tetrahydrofolate. The protein is Formate-dependent phosphoribosylglycinamide formyltransferase of Shigella dysenteriae serotype 1 (strain Sd197).